The following is a 365-amino-acid chain: Histidinol-phosphate aminotransferase (365 aa).

Lys-222 is subject to N6-(pyridoxal phosphate)lysine.

It belongs to the class-II pyridoxal-phosphate-dependent aminotransferase family. Histidinol-phosphate aminotransferase subfamily. As to quaternary structure, homodimer. Requires pyridoxal 5'-phosphate as cofactor.

The enzyme catalyses L-histidinol phosphate + 2-oxoglutarate = 3-(imidazol-4-yl)-2-oxopropyl phosphate + L-glutamate. Its pathway is amino-acid biosynthesis; L-histidine biosynthesis; L-histidine from 5-phospho-alpha-D-ribose 1-diphosphate: step 7/9. This Geobacillus sp. (strain WCH70) protein is Histidinol-phosphate aminotransferase.